The chain runs to 159 residues: Cyclic pyranopterin monophosphate synthase (159 aa).

Substrate-binding positions include 75 to 77 and 113 to 114; these read LCH and ME. D128 is an active-site residue.

Belongs to the MoaC family. As to quaternary structure, homohexamer; trimer of dimers.

It catalyses the reaction (8S)-3',8-cyclo-7,8-dihydroguanosine 5'-triphosphate = cyclic pyranopterin phosphate + diphosphate. It functions in the pathway cofactor biosynthesis; molybdopterin biosynthesis. Its function is as follows. Catalyzes the conversion of (8S)-3',8-cyclo-7,8-dihydroguanosine 5'-triphosphate to cyclic pyranopterin monophosphate (cPMP). The protein is Cyclic pyranopterin monophosphate synthase of Cupriavidus necator (strain ATCC 17699 / DSM 428 / KCTC 22496 / NCIMB 10442 / H16 / Stanier 337) (Ralstonia eutropha).